Consider the following 215-residue polypeptide: Small ribosomal subunit protein uS3 (215 aa).

One can recognise a KH type-2 domain in the interval 39–109 (IRKFIKKRLE…EVLVDVKEVK (71 aa)).

This sequence belongs to the universal ribosomal protein uS3 family. Part of the 30S ribosomal subunit. Forms a tight complex with proteins S10 and S14.

In terms of biological role, binds the lower part of the 30S subunit head. Binds mRNA in the 70S ribosome, positioning it for translation. In Methylacidiphilum infernorum (isolate V4) (Methylokorus infernorum (strain V4)), this protein is Small ribosomal subunit protein uS3.